A 473-amino-acid polypeptide reads, in one-letter code: H(+)/Cl(-) exchange transporter ClcA (473 aa).

Topologically, residues Met1 to Pro32 are cytoplasmic. The helical transmembrane segment at Leu33–Val69 threads the bilayer. Topologically, residues His70–Pro76 are periplasmic. The helical transmembrane segment at Leu77–Tyr100 threads the bilayer. The short motif at Gly106–Pro110 is the Selectivity filter part_1 element. Ser107 is a chloride binding site. Residues Ile109–Leu116 constitute an intramembrane region (helical). Residues Glu117 to Arg123 are Cytoplasmic-facing. A run of 2 helical transmembrane segments spans residues Trp124–Gly141 and Glu148–Phe166. The short motif at Gly146–Pro150 is the Selectivity filter part_2 element. At Arg167–Thr176 the chain is on the cytoplasmic side. 2 consecutive intramembrane regions (helical) follow at residues Leu177 to Ala189 and Pro193 to Ile201. Residues Glu202–Ser214 lie on the Cytoplasmic side of the membrane. The chain crosses the membrane as a helical span at residues Ile215–Phe232. Residues Asn233–Gln252 are Periplasmic-facing. The helical transmembrane segment at Trp253–His281 threads the bilayer. The Cytoplasmic segment spans residues Arg282 to Asn287. A helical transmembrane segment spans residues Ile288–Ala309. The Periplasmic portion of the chain corresponds to Pro310–Ser329. 2 helical membrane passes run Met330–Ser349 and Gly355–Val376. The Selectivity filter part_3 signature appears at Gly355–Pro359. The chloride site is built by Ile356 and Phe357. The Periplasmic segment spans residues Glu377–Ala386. The helical intramembrane region spans Gly387–Ser401. Residues Ile402–Ala404 constitute an intramembrane region (note=Loop between two helices). The helical intramembrane region spans Pro405–Thr416. The segment at residues Asp417 to Leu421 is an intramembrane region (note=Loop between two helices). A helical transmembrane segment spans residues Ile422–Phe438. Residues Thr439–Thr473 lie on the Cytoplasmic side of the membrane. Residue Tyr445 coordinates chloride.

This sequence belongs to the chloride channel (TC 2.A.49) family. ClcA subfamily. Homodimer.

The protein resides in the cell inner membrane. It catalyses the reaction 2 chloride(in) + H(+)(out) = 2 chloride(out) + H(+)(in). Its function is as follows. Proton-coupled chloride transporter. Functions as antiport system and exchanges two chloride ions for 1 proton. Probably acts as an electrical shunt for an outwardly-directed proton pump that is linked to amino acid decarboxylation, as part of the extreme acid resistance (XAR) response. The chain is H(+)/Cl(-) exchange transporter ClcA from Shigella boydii serotype 18 (strain CDC 3083-94 / BS512).